The following is a 506-amino-acid chain: Protein MGF 505-4R (506 aa).

It belongs to the asfivirus MGF 505 family.

In terms of biological role, plays a role in virus cell tropism, and may be required for efficient virus replication in macrophages. In Ornithodoros (relapsing fever ticks), this protein is Protein MGF 505-4R.